Consider the following 382-residue polypeptide: Transcription factor MYB104 (382 aa).

HTH myb-type domains lie at 13–69 (KKTF…KPSL) and 70–120 (KKGP…MRLK). DNA-binding regions (H-T-H motif) lie at residues 41–65 (WTHVPKRTGLPHNPASCRFRWMNHL) and 93–116 (WSQMAREFPGRTDNEIKNFWNARR). The interval 326-364 (IPKTDTSSESQLFQSSLRSHTDATPDIANTTGYVGSNER) is disordered. Composition is skewed to polar residues over residues 329 to 343 (TDTSSESQLFQSSLR) and 352 to 364 (IANTTGYVGSNER).

The protein localises to the nucleus. The sequence is that of Transcription factor MYB104 (MYB104) from Arabidopsis thaliana (Mouse-ear cress).